Reading from the N-terminus, the 89-residue chain is Neurotoxin LmNaTx28 (89 aa).

The first 18 residues, 1–18, serve as a signal peptide directing secretion; sequence MNLPTVLCIIALILGVRS. Positions 20–85 constitute an LCN-type CS-alpha/beta domain; the sequence is KNGFFTKLGK…VADSSEKACQ (66 aa). 4 disulfides stabilise this stretch: Cys-33/Cys-57, Cys-43/Cys-62, Cys-47/Cys-64, and Cys-58/Cys-84.

Belongs to the long (4 C-C) scorpion toxin superfamily. Sodium channel inhibitor family. Beta subfamily. As to expression, expressed by the venom gland.

It localises to the secreted. In terms of biological role, binds voltage-independently at site-4 of sodium channels (Nav) and shift the voltage of activation toward more negative potentials thereby affecting sodium channel activation and promoting spontaneous and repetitive firing. In Lychas mucronatus (Chinese swimming scorpion), this protein is Neurotoxin LmNaTx28.